Reading from the N-terminus, the 119-residue chain is uncharacterized protein (119 aa).

2 consecutive transmembrane segments (helical) span residues L61 to V80 and V87 to I103.

Its subcellular location is the membrane. This is an uncharacterized protein from Saccharomyces cerevisiae (strain ATCC 204508 / S288c) (Baker's yeast).